Consider the following 601-residue polypeptide: MSDPTASPLIWRDDGMPQSALYGDVYFSSADGLAETRAVFLAGCDLPAAWAGRDHFTVGELGFGTGLNIAALLDLWRREKAPHSMQGGQRLHIFSIEAHPITRDEAARALAVWPELGEAASVLLDHWPGLARGFHRIDLPGFDATFDLAVMDVEPALAAWDGAADAWFLDGFSPALNPAMWREEILAAVAARSAPGARAATFTVAGAVRRGLSAAGFQVDRRPGFGRKKQRLEAVAPGVAASPPRPRRLAVIGGGIAGAAMARAARAEGLEAMMFDDGQAPASGNPAALVTPALDAGGGPRAALPAQAFARAAALYEALPEAVIARGALKLSVVPRDEARHAAVADQDLFEPGTMAVLDAATATARLGEPVGEALSMSQALVVEPARVLDAWRGEVIDAQVARLAHEDGVWRLLGSDDQLLAEVDAVVLAGGAGQARLWPDAPLRPIRGQTSWTDRPLAFPTPAAFGGYVAPTRDGMLFGATHDRDDVGTDARAEDDRRNLRALAEGLPKLAASLADAPLRGRAAVRATTADHLPVAGAVPGAAPGLFVLGGLGGRGFCLAPLLAEHLAARILALPSPLPRPLSALVEPGRFSSRVATGAV.

Positions 1–237 (MSDPTASPLI…KKQRLEAVAP (237 aa)) are tRNA (mnm(5)s(2)U34)-methyltransferase. The interval 252–601 (IGGGIAGAAM…FSSRVATGAV (350 aa)) is FAD-dependent cmnm(5)s(2)U34 oxidoreductase.

It in the N-terminal section; belongs to the methyltransferase superfamily. tRNA (mnm(5)s(2)U34)-methyltransferase family. In the C-terminal section; belongs to the DAO family. The cofactor is FAD.

Its subcellular location is the cytoplasm. It catalyses the reaction 5-aminomethyl-2-thiouridine(34) in tRNA + S-adenosyl-L-methionine = 5-methylaminomethyl-2-thiouridine(34) in tRNA + S-adenosyl-L-homocysteine + H(+). In terms of biological role, catalyzes the last two steps in the biosynthesis of 5-methylaminomethyl-2-thiouridine (mnm(5)s(2)U) at the wobble position (U34) in tRNA. Catalyzes the FAD-dependent demodification of cmnm(5)s(2)U34 to nm(5)s(2)U34, followed by the transfer of a methyl group from S-adenosyl-L-methionine to nm(5)s(2)U34, to form mnm(5)s(2)U34. The protein is tRNA 5-methylaminomethyl-2-thiouridine biosynthesis bifunctional protein MnmC of Caulobacter sp. (strain K31).